Consider the following 299-residue polypeptide: Oxygen-dependent coproporphyrinogen-III oxidase (299 aa).

Residue Ser-92 participates in substrate binding. A divalent metal cation is bound by residues His-96 and His-106. The active-site Proton donor is the His-106. Asn-108–Arg-110 contacts substrate. Residues His-145 and His-175 each coordinate a divalent metal cation. The important for dimerization stretch occupies residues Tyr-239–Glu-274. Gly-257–Arg-259 contributes to the substrate binding site.

Belongs to the aerobic coproporphyrinogen-III oxidase family. Homodimer. A divalent metal cation is required as a cofactor.

The protein resides in the cytoplasm. It carries out the reaction coproporphyrinogen III + O2 + 2 H(+) = protoporphyrinogen IX + 2 CO2 + 2 H2O. It participates in porphyrin-containing compound metabolism; protoporphyrin-IX biosynthesis; protoporphyrinogen-IX from coproporphyrinogen-III (O2 route): step 1/1. Its function is as follows. Involved in the heme biosynthesis. Catalyzes the aerobic oxidative decarboxylation of propionate groups of rings A and B of coproporphyrinogen-III to yield the vinyl groups in protoporphyrinogen-IX. The chain is Oxygen-dependent coproporphyrinogen-III oxidase from Xanthomonas axonopodis pv. citri (strain 306).